The following is a 281-amino-acid chain: MEMO1 family protein APE_1771 (281 aa).

It belongs to the MEMO1 family.

The polypeptide is MEMO1 family protein APE_1771 (Aeropyrum pernix (strain ATCC 700893 / DSM 11879 / JCM 9820 / NBRC 100138 / K1)).